A 153-amino-acid polypeptide reads, in one-letter code: Regulator of ribonuclease activity B (153 aa).

The segment at aspartate 114 to histidine 153 is disordered. Residues proline 115–histidine 153 are compositionally biased toward acidic residues.

The protein belongs to the RraB family. Interacts with the C-terminal region of Rne.

The protein localises to the cytoplasm. Functionally, globally modulates RNA abundance by binding to RNase E (Rne) and regulating its endonucleolytic activity. Can modulate Rne action in a substrate-dependent manner by altering the composition of the degradosome. This Haemophilus influenzae (strain ATCC 51907 / DSM 11121 / KW20 / Rd) protein is Regulator of ribonuclease activity B.